The following is a 395-amino-acid chain: Dual specificity protein phosphatase 4 (395 aa).

An N-acetylvaline modification is found at valine 2. Residues serine 42–serine 160 form the Rhodanese domain. The region spanning glycine 196–threonine 337 is the Tyrosine-protein phosphatase domain. Cysteine 281 acts as the Phosphocysteine intermediate in catalysis. A phosphoserine; by MAPK mark is found at serine 387 and serine 392.

The protein belongs to the protein-tyrosine phosphatase family. Non-receptor class dual specificity subfamily. As to quaternary structure, hollow spherical complex composed of 24 subunits with pseudooctahedral symmetry, has a tetramer as the basic unit. In terms of processing, phosphorylation in the C-terminus by ERK1/2 inhibits proteasomal degradation and stabilizes the protein. As to expression, expressed at moderate levels in nearly all tissues and cells including brain, spleen, and testes with the higher expression in the heart and lung and lower expression in skeletal muscle and kidney. Undetectable in liver. Expressed in many areas of the brain with very strong expression in the hippocampus, piriform cortex, and the suprachiasmatic nucleus.

It is found in the nucleus. The catalysed reaction is O-phospho-L-tyrosyl-[protein] + H2O = L-tyrosyl-[protein] + phosphate. It catalyses the reaction O-phospho-L-seryl-[protein] + H2O = L-seryl-[protein] + phosphate. It carries out the reaction O-phospho-L-threonyl-[protein] + H2O = L-threonyl-[protein] + phosphate. Its function is as follows. Regulates mitogenic signal transduction by dephosphorylating both Thr and Tyr residues on MAP kinases ERK1 and ERK2. The polypeptide is Dual specificity protein phosphatase 4 (Dusp4) (Rattus norvegicus (Rat)).